The following is a 224-amino-acid chain: UPF0758 protein mma_2551 (224 aa).

In terms of domain architecture, MPN spans Ser102–Leu224. Zn(2+)-binding residues include His173, His175, and Asp186. A JAMM motif motif is present at residues His173–Asp186.

Belongs to the UPF0758 family.

This chain is UPF0758 protein mma_2551, found in Janthinobacterium sp. (strain Marseille) (Minibacterium massiliensis).